A 464-amino-acid chain; its full sequence is MTVVSVEHALAGKLPEGGEVTVRGWVRTLRGSAGLAFINVTDGSCFAPIQVVANDTLPNFDEIKRLTSGCSLIAKGVLVKSQGKGQSFEIQASGVDVVGWVEDPLTYPIQPKPMTPEFLREVAHLRPRTNLFGAVTRIRNCLAQAVHRFFHQNGFNWISTPIITTSDAEGAGQMFRVSTLDMVNLPRDASGAVDFSRDFFGKETFLTVSGQLNVEAYCLALSKVYTFGPTFRAENSHTTRHLAEFWMIEPEIAFADLAEDARLAEQFLKYLFRAVLDERGDDLAFLAERVDKNAIAKLEAFINAPFEQIDYTDAVKLLQNSGKKFDFPVEWGLDLQTEHERWLTEEHIGRPVVVTNYPEHIKAFYMRLNDDGKTVAAMDVLAPGIGEIIGGSQREERLDVLDARMAQFGLDKEHYSWYRDFRRYGSVPHAGFGLGFERLVVYVCGLSNIRDAIPYPRAPGSAEF.

It belongs to the class-II aminoacyl-tRNA synthetase family. In terms of assembly, homodimer.

It is found in the cytoplasm. The enzyme catalyses tRNA(Asn) + L-asparagine + ATP = L-asparaginyl-tRNA(Asn) + AMP + diphosphate + H(+). The sequence is that of Asparagine--tRNA ligase from Xanthomonas axonopodis pv. citri (strain 306).